The primary structure comprises 55 residues: Sec-independent protein translocase protein TatA (55 aa).

The helical transmembrane segment at 1-21 (MGMSFSHLLIVLLIIFVLFGA) threads the bilayer.

It belongs to the TatA/E family. As to quaternary structure, the Tat system comprises two distinct complexes: a TatABC complex, containing multiple copies of TatA, TatB and TatC subunits, and a separate TatA complex, containing only TatA subunits. Substrates initially bind to the TatABC complex, which probably triggers association of the separate TatA complex to form the active translocon.

It localises to the cell inner membrane. In terms of biological role, part of the twin-arginine translocation (Tat) system that transports large folded proteins containing a characteristic twin-arginine motif in their signal peptide across membranes. TatA could form the protein-conducting channel of the Tat system. In Rickettsia peacockii (strain Rustic), this protein is Sec-independent protein translocase protein TatA.